The primary structure comprises 288 residues: MATYAVGDLQGCLQPLKCLLERVSFNPAVDRLWLVGDLVNRGPESLETLRFLYSIRQSLVCVLGNHDLHLLAAWHNVERLKKSDTLREIIEAPDADPLFDWLRQQKLLHYDEARGIAMAHAGIPPQWTLGQALGYAAEVEEALRDDSRLKLYLDGMYGNEPNKWSKNLTGVERLRVITNYLTRMRFCTAEGKLDLKSKEGLGTAPKGYKPWFAHKGRRSRHVTIIFGHWAALEGRVDEPGIIALDTGCVWGGAMTLYNVDSGEYHRCDCADDGTLRQPAQPTTLNDHT.

This sequence belongs to the Ap4A hydrolase family.

It carries out the reaction P(1),P(4)-bis(5'-adenosyl) tetraphosphate + H2O = 2 ADP + 2 H(+). Hydrolyzes diadenosine 5',5'''-P1,P4-tetraphosphate to yield ADP. The sequence is that of Bis(5'-nucleosyl)-tetraphosphatase, symmetrical from Pseudomonas putida (strain GB-1).